The primary structure comprises 39 residues: GGKEGYPLNSSNGCKSGRFAGTNSNENTECKGXDAENGY.

The tract at residues 1–39 is disordered; it reads GGKEGYPLNSSNGCKSGRFAGTNSNENTECKGXDAENGY. Positions 3–39 constitute an LCN-type CS-alpha/beta domain; it reads KEGYPLNSSNGCKSGRFAGTNSNENTECKGXDAENGY. Basic and acidic residues predominate over residues 28 to 39; it reads TECKGXDAENGY.

This sequence belongs to the long (4 C-C) scorpion toxin superfamily. Sodium channel inhibitor family. Beta subfamily. In terms of tissue distribution, expressed by the venom gland.

The protein resides in the secreted. Its function is as follows. Beta toxins bind voltage-independently at site-4 of sodium channels (Nav) and shift the voltage of activation toward more negative potentials thereby affecting sodium channel activation and promoting spontaneous and repetitive firing. This is Putative beta-neurotoxin from Tityus pachyurus (Colombian scorpion).